The primary structure comprises 326 residues: uncharacterized protein (326 aa).

The segment at 293 to 326 (HRNYDANHSTSGEEENSGSRSRIAELSQSTIHRR) is disordered.

This is an uncharacterized protein from Oryza latifolia (Indian wild rice).